The following is a 649-amino-acid chain: Putative calpain-like cysteine protease A (649 aa).

The propeptide occupies 1-3 (MLT). Disordered regions lie at residues 1-22 (MLTT…SSPS) and 124-193 (PLSN…SMPA). The region spanning 15–123 (TTTTSSPSSD…LHANGEAKWY (109 aa)) is the C2 domain. Positions 140–149 (ITNSNNKDNN) are enriched in low complexity. Residues 159–172 (AQEKGDEDQHHSAD) are compositionally biased toward basic and acidic residues. Domain III regions lie at residues 458–489 (EGTY…NATF) and 498–633 (EVEQ…ISLD).

This sequence belongs to the peptidase C2 family. As to quaternary structure, monomer. Undergoes autolytic cleavage between Pro-192 and Ala-193.

The protein resides in the cytoplasm. Its subcellular location is the cytosol. Its function is as follows. Has a weak caseinolytic activity. This chain is Putative calpain-like cysteine protease A (cplA), found in Dictyostelium discoideum (Social amoeba).